Here is a 269-residue protein sequence, read N- to C-terminus: Alcohol dehydrogenase-related 31 kDa protein (269 aa).

Residue 11–34 (YVADCGGIALETCKVLMTKNIAKL) coordinates NAD(+). Substrate is bound at residue serine 139. The active-site Proton acceptor is tyrosine 152.

The protein belongs to the short-chain dehydrogenases/reductases (SDR) family.

In Drosophila lebanonensis (Fruit fly), this protein is Alcohol dehydrogenase-related 31 kDa protein (Adhr).